A 367-amino-acid chain; its full sequence is Dual-specificity RNA methyltransferase RlmN (367 aa).

The active-site Proton acceptor is glutamate 91. The region spanning 102–337 is the Radical SAM core domain; it reads GKVRMTQCLS…AIIRKSKGQD (236 aa). A disulfide bridge links cysteine 109 with cysteine 342. Residues cysteine 116, cysteine 120, and cysteine 123 each contribute to the [4Fe-4S] cluster site. S-adenosyl-L-methionine-binding positions include 169–170, serine 201, 223–225, and asparagine 299; these read GE and SLH. Residue cysteine 342 is the S-methylcysteine intermediate of the active site.

It belongs to the radical SAM superfamily. RlmN family. Requires [4Fe-4S] cluster as cofactor.

The protein resides in the cytoplasm. It carries out the reaction adenosine(2503) in 23S rRNA + 2 reduced [2Fe-2S]-[ferredoxin] + 2 S-adenosyl-L-methionine = 2-methyladenosine(2503) in 23S rRNA + 5'-deoxyadenosine + L-methionine + 2 oxidized [2Fe-2S]-[ferredoxin] + S-adenosyl-L-homocysteine. It catalyses the reaction adenosine(37) in tRNA + 2 reduced [2Fe-2S]-[ferredoxin] + 2 S-adenosyl-L-methionine = 2-methyladenosine(37) in tRNA + 5'-deoxyadenosine + L-methionine + 2 oxidized [2Fe-2S]-[ferredoxin] + S-adenosyl-L-homocysteine. Specifically methylates position 2 of adenine 2503 in 23S rRNA and position 2 of adenine 37 in tRNAs. m2A2503 modification seems to play a crucial role in the proofreading step occurring at the peptidyl transferase center and thus would serve to optimize ribosomal fidelity. This chain is Dual-specificity RNA methyltransferase RlmN, found in Nitratidesulfovibrio vulgaris (strain DSM 19637 / Miyazaki F) (Desulfovibrio vulgaris).